A 743-amino-acid chain; its full sequence is Threonine synthase-like 1 (743 aa).

Lysine 281 is modified (N6-acetyllysine). N6-(pyridoxal phosphate)lysine is present on lysine 351.

This sequence belongs to the threonine synthase family. Pyridoxal 5'-phosphate serves as cofactor.

This is Threonine synthase-like 1 (THNSL1) from Pongo abelii (Sumatran orangutan).